The sequence spans 193 residues: Deoxycytidylate deaminase (193 aa).

In terms of domain architecture, CMP/dCMP-type deaminase spans 1 to 171; the sequence is MKASTVLQIA…DILRNAGIEV (171 aa). 5 residues coordinate Zn(2+): Cys19, Cys49, His94, Glu102, and His104. The Proton donor role is filled by Glu106. Residues Cys132 and Cys135 each coordinate Zn(2+). Tyr153 is a substrate binding site.

This sequence belongs to the cytidine and deoxycytidylate deaminase family. In terms of assembly, homohexamer. The cofactor is Zn(2+).

It carries out the reaction dCMP + H2O + H(+) = dUMP + NH4(+). With respect to regulation, allosteric enzyme whose activity is greatly influenced by the end products of its metabolic pathway, dCTP and dTTP. Supplies the nucleotide substrate for thymidylate synthetase. This chain is Deoxycytidylate deaminase (CD), found in Escherichia coli (Bacteriophage T4).